The sequence spans 255 residues: Urease accessory protein UreD 1 (255 aa).

Belongs to the UreD family. As to quaternary structure, ureD, UreF and UreG form a complex that acts as a GTP-hydrolysis-dependent molecular chaperone, activating the urease apoprotein by helping to assemble the nickel containing metallocenter of UreC. The UreE protein probably delivers the nickel.

Its subcellular location is the cytoplasm. Required for maturation of urease via the functional incorporation of the urease nickel metallocenter. This chain is Urease accessory protein UreD 1, found in Saccharopolyspora erythraea (strain ATCC 11635 / DSM 40517 / JCM 4748 / NBRC 13426 / NCIMB 8594 / NRRL 2338).